The following is a 485-amino-acid chain: MNNQDQSLIFEVSKEGRVGYSLPELDVPETDVTDVIDEAYIRDEPADLPEVSELDIMRHYTALSRRNHGVDSGFYPLGSCTMKYNPKINEKIARIPGFSAIHPLQDEATVQGALELLYDLSEHLEEITGMDEVTLQPAAGAHGEWTGLMMIRAFHEANGDHKRTKVIVPDSAHGTNPASATVAGFETVTVKSNDDGLVDLEDLKRVVDEETAALMLTNPNTLGLFEENILEMAEIVHSAGGKLYYDGANLNAVLSKARPGDMGFDVVHLNLHKTFTGPHGGGGPGSGPVGVKKELIPYLPKPVLVKKDGRYTFDHDRPHSIGRVKPYYGNFGINVRAYTYIRSMGPDGLKEVTENAVLNANYMMRKLAPYYDLPFDRHSKHEFVLSGRRQKKLGVRTLDIAKRLLDFGFHPPTIYFPLNVEECIMIEPTETESKETLDAFIDTMIQIAKEAEETPEVVQEAPHTTVVKRMDETKAARKPVLRYEK.

Lysine 273 is modified (N6-(pyridoxal phosphate)lysine).

This sequence belongs to the GcvP family. C-terminal subunit subfamily. As to quaternary structure, the glycine cleavage system is composed of four proteins: P, T, L and H. In this organism, the P 'protein' is a heterodimer of two subunits. Requires pyridoxal 5'-phosphate as cofactor.

The catalysed reaction is N(6)-[(R)-lipoyl]-L-lysyl-[glycine-cleavage complex H protein] + glycine + H(+) = N(6)-[(R)-S(8)-aminomethyldihydrolipoyl]-L-lysyl-[glycine-cleavage complex H protein] + CO2. The glycine cleavage system catalyzes the degradation of glycine. The P protein binds the alpha-amino group of glycine through its pyridoxal phosphate cofactor; CO(2) is released and the remaining methylamine moiety is then transferred to the lipoamide cofactor of the H protein. The protein is Probable glycine dehydrogenase (decarboxylating) subunit 2 of Bacillus licheniformis (strain ATCC 14580 / DSM 13 / JCM 2505 / CCUG 7422 / NBRC 12200 / NCIMB 9375 / NCTC 10341 / NRRL NRS-1264 / Gibson 46).